The following is a 172-amino-acid chain: C-phycocyanin beta chain (172 aa).

N72 carries the post-translational modification N4-methylasparagine. Residues C82 and C153 each coordinate (2R,3E)-phycocyanobilin.

This sequence belongs to the phycobiliprotein family. In terms of assembly, heterodimer of an alpha and a beta subunit, which further assembles into trimers and the trimers into hexamers. The basic functional unit of phycobiliproteins is a ring-shaped hexamer formed from two back-to-back trimers contacting via the alpha chain subunits. The trimers are composed of alpha/beta subunit heterodimers arranged around a three-fold axis of symmetry. The phycoerythrins also contain a gamma subunit which is located in the center of the hexamer. Contains two covalently linked bilin chromophores.

It is found in the plastid. The protein resides in the chloroplast thylakoid membrane. Its function is as follows. Light-harvesting photosynthetic bile pigment-protein from the phycobiliprotein complex (phycobilisome, PBS). Phycocyanin is the major phycobiliprotein in the PBS rod. This is C-phycocyanin beta chain (cpcB) from Porphyra purpurea (Red seaweed).